A 493-amino-acid chain; its full sequence is Proline--tRNA ligase (493 aa).

This sequence belongs to the class-II aminoacyl-tRNA synthetase family. ProS type 3 subfamily. In terms of assembly, homodimer.

The protein localises to the cytoplasm. The catalysed reaction is tRNA(Pro) + L-proline + ATP = L-prolyl-tRNA(Pro) + AMP + diphosphate. Functionally, catalyzes the attachment of proline to tRNA(Pro) in a two-step reaction: proline is first activated by ATP to form Pro-AMP and then transferred to the acceptor end of tRNA(Pro). This chain is Proline--tRNA ligase, found in Porphyromonas gingivalis (strain ATCC 33277 / DSM 20709 / CIP 103683 / JCM 12257 / NCTC 11834 / 2561).